A 267-amino-acid chain; its full sequence is Glutamate 5-kinase (267 aa).

ATP is bound at residue Lys15. Substrate contacts are provided by Ser55, Asp142, and Asn158. ATP-binding positions include 178-179 (SD) and 220-226 (TGGMATK).

Belongs to the glutamate 5-kinase family.

Its subcellular location is the cytoplasm. The catalysed reaction is L-glutamate + ATP = L-glutamyl 5-phosphate + ADP. It participates in amino-acid biosynthesis; L-proline biosynthesis; L-glutamate 5-semialdehyde from L-glutamate: step 1/2. Functionally, catalyzes the transfer of a phosphate group to glutamate to form L-glutamate 5-phosphate. In Ligilactobacillus salivarius (strain UCC118) (Lactobacillus salivarius), this protein is Glutamate 5-kinase.